The following is a 457-amino-acid chain: 6-phosphofructo-2-kinase/fructose-2,6-bisphosphatase (457 aa).

The interval 1 to 20 (MEIPPGLETTKRKVAHSDEH) is disordered. The interval 1–244 (MEIPPGLETT…VYFLMNIHLL (244 aa)) is 6-phosphofructo-2-kinase. Basic and acidic residues predominate over residues 9 to 20 (TTKRKVAHSDEH). Residue 36 to 44 (GLPARGKTY) participates in ATP binding. Positions 69 and 98 each coordinate beta-D-fructose 6-phosphate. The active site involves Asp124. Beta-D-fructose 6-phosphate-binding residues include Thr126 and Arg132. Cys154 is an active-site residue. Residue 163–168 (NVTDVK) participates in ATP binding. 3 residues coordinate beta-D-fructose 6-phosphate: Lys168, Arg190, and Tyr194. Residues 245 to 457 (PRSIYLTRHG…QLPLCDSPRD (213 aa)) form a fructose-2,6-bisphosphatase region. Residue Arg252 coordinates beta-D-fructose 2,6-bisphosphate. The active-site Tele-phosphohistidine intermediate is the His253. Residues Asn259 and Gly265 each contribute to the beta-D-fructose 2,6-bisphosphate site. The Proton donor/acceptor role is filled by Glu324. The beta-D-fructose 2,6-bisphosphate site is built by Tyr335, Arg349, Lys353, Tyr364, Gln390, and Arg394. 346–349 (ADDR) is a binding site for ATP. Residues 390 to 394 (QAVLR) and Tyr426 contribute to the ATP site.

In the C-terminal section; belongs to the phosphoglycerate mutase family.

The enzyme catalyses beta-D-fructose 2,6-bisphosphate + H2O = beta-D-fructose 6-phosphate + phosphate. It carries out the reaction beta-D-fructose 6-phosphate + ATP = beta-D-fructose 2,6-bisphosphate + ADP + H(+). Its function is as follows. Synthesis and degradation of fructose 2,6-bisphosphate. This is 6-phosphofructo-2-kinase/fructose-2,6-bisphosphatase from Caenorhabditis elegans.